We begin with the raw amino-acid sequence, 413 residues long: Arginine biosynthesis bifunctional protein ArgJ (413 aa).

The substrate site is built by Thr-158, Lys-184, Thr-195, Glu-285, Asn-408, and Ser-413. The active-site Nucleophile is Thr-195.

Belongs to the ArgJ family. As to quaternary structure, heterotetramer of two alpha and two beta chains.

It localises to the cytoplasm. The catalysed reaction is N(2)-acetyl-L-ornithine + L-glutamate = N-acetyl-L-glutamate + L-ornithine. It catalyses the reaction L-glutamate + acetyl-CoA = N-acetyl-L-glutamate + CoA + H(+). It functions in the pathway amino-acid biosynthesis; L-arginine biosynthesis; L-ornithine and N-acetyl-L-glutamate from L-glutamate and N(2)-acetyl-L-ornithine (cyclic): step 1/1. It participates in amino-acid biosynthesis; L-arginine biosynthesis; N(2)-acetyl-L-ornithine from L-glutamate: step 1/4. Functionally, catalyzes two activities which are involved in the cyclic version of arginine biosynthesis: the synthesis of N-acetylglutamate from glutamate and acetyl-CoA as the acetyl donor, and of ornithine by transacetylation between N(2)-acetylornithine and glutamate. The sequence is that of Arginine biosynthesis bifunctional protein ArgJ from Brucella suis biovar 1 (strain 1330).